Here is a 231-residue protein sequence, read N- to C-terminus: MKLAVIGAMEEEVTILRSKLKDAKQEMIAHCEFTTGSYEGVEVILLKSGIGKVNAAISTTLLLDRFKPDYVINTGSAGGFHHTLNVGDVVISTDVRHHDVDVTAFDYEYGQVPGLPAAYKADEKLISITEEAVSELNGIQVAKGTIATGDSFMNDPKRVEDVRAKFADLYAVEMEAAAVAQVCHQFKTPFVVIRALSDIAGKESDVSFDKFLEQAAVHSTELVLNVIKRIH.

E12 acts as the Proton acceptor in catalysis. Substrate contacts are provided by residues G78, M153, and 174–175 (ME). D198 acts as the Proton donor in catalysis.

This sequence belongs to the PNP/UDP phosphorylase family. MtnN subfamily.

The catalysed reaction is S-adenosyl-L-homocysteine + H2O = S-(5-deoxy-D-ribos-5-yl)-L-homocysteine + adenine. It carries out the reaction S-methyl-5'-thioadenosine + H2O = 5-(methylsulfanyl)-D-ribose + adenine. The enzyme catalyses 5'-deoxyadenosine + H2O = 5-deoxy-D-ribose + adenine. Its pathway is amino-acid biosynthesis; L-methionine biosynthesis via salvage pathway; S-methyl-5-thio-alpha-D-ribose 1-phosphate from S-methyl-5'-thioadenosine (hydrolase route): step 1/2. Functionally, catalyzes the irreversible cleavage of the glycosidic bond in both 5'-methylthioadenosine (MTA) and S-adenosylhomocysteine (SAH/AdoHcy) to adenine and the corresponding thioribose, 5'-methylthioribose and S-ribosylhomocysteine, respectively. Also cleaves 5'-deoxyadenosine, a toxic by-product of radical S-adenosylmethionine (SAM) enzymes, into 5-deoxyribose and adenine. In Bacillus velezensis (strain DSM 23117 / BGSC 10A6 / LMG 26770 / FZB42) (Bacillus amyloliquefaciens subsp. plantarum), this protein is 5'-methylthioadenosine/S-adenosylhomocysteine nucleosidase.